A 222-amino-acid polypeptide reads, in one-letter code: Phosphoribosylformylglycinamidine synthase subunit PurQ (222 aa).

The Glutamine amidotransferase type-1 domain occupies 2-222 (SVAIVRFPGT…DNLLHIAEMK (221 aa)). The active-site Nucleophile is cysteine 86. Catalysis depends on residues histidine 194 and glutamate 196.

As to quaternary structure, part of the FGAM synthase complex composed of 1 PurL, 1 PurQ and 2 PurS subunits.

It localises to the cytoplasm. The enzyme catalyses N(2)-formyl-N(1)-(5-phospho-beta-D-ribosyl)glycinamide + L-glutamine + ATP + H2O = 2-formamido-N(1)-(5-O-phospho-beta-D-ribosyl)acetamidine + L-glutamate + ADP + phosphate + H(+). It catalyses the reaction L-glutamine + H2O = L-glutamate + NH4(+). Its pathway is purine metabolism; IMP biosynthesis via de novo pathway; 5-amino-1-(5-phospho-D-ribosyl)imidazole from N(2)-formyl-N(1)-(5-phospho-D-ribosyl)glycinamide: step 1/2. Part of the phosphoribosylformylglycinamidine synthase complex involved in the purines biosynthetic pathway. Catalyzes the ATP-dependent conversion of formylglycinamide ribonucleotide (FGAR) and glutamine to yield formylglycinamidine ribonucleotide (FGAM) and glutamate. The FGAM synthase complex is composed of three subunits. PurQ produces an ammonia molecule by converting glutamine to glutamate. PurL transfers the ammonia molecule to FGAR to form FGAM in an ATP-dependent manner. PurS interacts with PurQ and PurL and is thought to assist in the transfer of the ammonia molecule from PurQ to PurL. This chain is Phosphoribosylformylglycinamidine synthase subunit PurQ, found in Helicobacter hepaticus (strain ATCC 51449 / 3B1).